The chain runs to 378 residues: uncharacterized protein (378 aa).

Residues 150–176 show a composition bias toward low complexity; it reads TTTATTSNNRFNNNNSNNNNINNNNDN. Residues 150–187 are disordered; it reads TTTATTSNNRFNNNNSNNNNINNNNDNNNKEQKKESRC. Basic and acidic residues predominate over residues 177-187; sequence NNKEQKKESRC.

This is an uncharacterized protein from Dictyostelium discoideum (Social amoeba).